A 159-amino-acid chain; its full sequence is ATP synthase subunit b 1 (159 aa).

The chain crosses the membrane as a helical span at residues 5-25 (FWAFIGLILFLALLFYFKVPA).

The protein belongs to the ATPase B chain family. As to quaternary structure, F-type ATPases have 2 components, F(1) - the catalytic core - and F(0) - the membrane proton channel. F(1) has five subunits: alpha(3), beta(3), gamma(1), delta(1), epsilon(1). F(0) has three main subunits: a(1), b(2) and c(10-14). The alpha and beta chains form an alternating ring which encloses part of the gamma chain. F(1) is attached to F(0) by a central stalk formed by the gamma and epsilon chains, while a peripheral stalk is formed by the delta and b chains.

The protein localises to the cell inner membrane. F(1)F(0) ATP synthase produces ATP from ADP in the presence of a proton or sodium gradient. F-type ATPases consist of two structural domains, F(1) containing the extramembraneous catalytic core and F(0) containing the membrane proton channel, linked together by a central stalk and a peripheral stalk. During catalysis, ATP synthesis in the catalytic domain of F(1) is coupled via a rotary mechanism of the central stalk subunits to proton translocation. Its function is as follows. Component of the F(0) channel, it forms part of the peripheral stalk, linking F(1) to F(0). In Bartonella bacilliformis (strain ATCC 35685 / KC583 / Herrer 020/F12,63), this protein is ATP synthase subunit b 1.